Reading from the N-terminus, the 260-residue chain is Small ribosomal subunit protein uS2 (260 aa).

Residues 228 to 240 (RKETKAENAEEAM) show a composition bias toward basic and acidic residues. Residues 228–260 (RKETKAENAEEAMKQAAEAEAEAAAPAAEESAE) form a disordered region. Residues 241-260 (KQAAEAEAEAAAPAAEESAE) show a composition bias toward low complexity.

The protein belongs to the universal ribosomal protein uS2 family.

The protein is Small ribosomal subunit protein uS2 of Oleidesulfovibrio alaskensis (strain ATCC BAA-1058 / DSM 17464 / G20) (Desulfovibrio alaskensis).